A 262-amino-acid chain; its full sequence is VPS74-like protein DDB_G0288371 (262 aa).

It belongs to the GOLPH3/VPS74 family.

It is found in the golgi apparatus. Its subcellular location is the golgi stack membrane. In terms of biological role, phosphatidylinositol-4-phosphate-binding protein that links Golgi membranes to the cytoskeleton and may participate in the tensile force required for vesicle budding from the Golgi. Thereby, may play a role in Golgi membrane trafficking. May also bind to the coatomer to regulate Golgi membrane trafficking. May play a role in anterograde transport from the Golgi to the plasma membrane and regulate secretion. May be involved in vacuolar protein sorting. This chain is VPS74-like protein DDB_G0288371, found in Dictyostelium discoideum (Social amoeba).